A 304-amino-acid polypeptide reads, in one-letter code: HTH-type transcriptional regulator AdmX (304 aa).

The HTH lysR-type domain maps to 1–58 (MKLRHLEIFYTVMTCGSLSRAAESLNISQPAASKSLKNAELKLGFKLFQRVRGKLLPS). A DNA-binding region (H-T-H motif) is located at residues 18-37 (LSRAAESLNISQPAASKSLK).

This sequence belongs to the LysR transcriptional regulatory family.

Its subcellular location is the cytoplasm. Its activity is regulated as follows. AdmX-mediated transcription is inhibited by indole-3-acetic and indole-3-pyruvic acids. AdmX recognizes and binds the auxin indole-3-acetic acid (IAA), which causes conformational changes in AdmX that result in the inhibition of the expression of the andrimid gene cluster and the suppression of antibiotic production. It also recognizes indole-3-pyruvic acid (IPA), an intermediate of the main IAA biosynthetic pathway in plants and plant beneficial bacteria, which also prevents andrimid synthesis, but to a much lesser extent. Its function is as follows. Positively regulates the biosynthesis of andrimid, a broad-spectrum antibiotic, by activating the expression of the adm biosynthetic gene cluster. It specifically binds to a region within the adm promoter. This chain is HTH-type transcriptional regulator AdmX, found in Serratia plymuthica.